The following is a 20-amino-acid chain: Hemocyanin subunit Ia (20 aa).

The disordered stretch occupies residues 1–20 (ADXQPGDSTDKLLAQKQDDV).

It belongs to the tyrosinase family. Hemocyanin subfamily. In terms of assembly, composed of 3 major subunits (IB, II and III) and 1 minor subunit (IA) which form homohexamers and heterohexamers. May also form larger structures. As to expression, hemolymph.

The protein resides in the secreted. The protein localises to the extracellular space. Functionally, hemocyanins are copper-containing oxygen carriers occurring freely dissolved in the hemolymph of many mollusks and arthropods. This is Hemocyanin subunit Ia from Panulirus japonicus (Japanese spiny lobster).